We begin with the raw amino-acid sequence, 611 residues long: Protein KINASE OF THE OUTER CHLOROPLAST MEMBRANE 1 (611 aa).

Topologically, residues methionine 1–proline 555 are cytoplasmic. The region spanning leucine 39–leucine 306 is the Protein kinase domain. Residues isoleucine 45–valine 53 and lysine 74 each bind ATP. A helical transmembrane segment spans residues leucine 556 to valine 572. The Chloroplast intermembrane segment spans residues arginine 573–phenylalanine 611. The interval serine 579–lysine 606 is disordered. Residues lysine 595–lysine 606 are compositionally biased toward basic and acidic residues.

The protein belongs to the protein kinase superfamily. Ser/Thr protein kinase family. In terms of assembly, associates with the TOC complex containing, at least, translocons at the chloroplast envelope (e.g. TOCs and TICs such as TOC159, TOC75, TOC33 and TIC56).

The protein resides in the plastid. Its subcellular location is the chloroplast outer membrane. The enzyme catalyses L-seryl-[protein] + ATP = O-phospho-L-seryl-[protein] + ADP + H(+). It catalyses the reaction L-threonyl-[protein] + ATP = O-phospho-L-threonyl-[protein] + ADP + H(+). In terms of biological role, serine/threonine protein kinase acting as a regulatory component of the plastid protein import machinery by phosphorylating import receptors (e.g. the A-domain of TOC159, TOC120 and TOC132). Supports preprotein import and contributes to efficient chloroplast biogenesis, thus being required for survival during de-etiolation. The chain is Protein KINASE OF THE OUTER CHLOROPLAST MEMBRANE 1 from Arabidopsis thaliana (Mouse-ear cress).